A 919-amino-acid chain; its full sequence is MEELTIWEQHTATLSKDPRRGFGIAISGGRDRPGGSMVVSDVVPGGPAEGRLQTGDHIVMVNGVSMENATSAFAIQILKTCTKMANITVKRPRRIHLPATKASPSSPGRQDSDEDDGPQRVEEVDQGRGYDGDSSSGSGRSWDERSRRPRPGRRGRAGSHGRRSPGGGSEANGLALVSGFKRLPRQDVQMKPVKSVLVKRRDSEEFGVKLGSQIFIKHITDSGLAARHRGLQEGDLILQINGVSSQNLSLNDTRRLIEKSEGKLSLLVLRDRGQFLVNIPPAVSDSDSSPLEDISDLASELSQAPPSHIPPPPRHAQRSPEASQTDSPVESPRLRRESSVDSRTISEPDEQRSELPRESSYDIYRVPSSQSMEDRGYSPDTRVVRFLKGKSIGLRLAGGNDVGIFVSGVQAGSPADGQGIQEGDQILQVNDVPFQNLTREEAVQFLLGLPPGEEMELVTQRKQDIFWKMVQSRVGDSFYIRTHFELEPSPPSGLGFTRGDVFHVLDTLHPGPGQSHARGGHWLAVRMGRDLREQERGIIPNQSRAEQLASLEAAQRAVGVGPGSSAGSNARAEFWRLRGLRRGAKKTTQRSREDLSALTRQGRYPPYERVVLREASFKRPVVILGPVADIAMQKLTAEMPDQFEIAETVSRTDSPSKIIKLDTVRVIAEKDKHALLDVTPSAIERLNYVQYYPIVVFFIPESRPALKALRQWLAPASRRSTRRLYAQAQKLRKHSSHLFTATIPLNGTSDTWYQELKAIIREQQTRPIWTAEDQLDGSLEDNLDLPHHGLADSSADLSCDSRVNSDYETDGEGGAYTDGEGYTDGEGGPYTDVDDEPPAPALARSSEPVQADESQSPRDRGRISAHQGAQVDSRHPQGQWRQDSMRTYEREALKKKFMRVHDAESSDEDGYDWGPATDL.

The PDZ 1 domain occupies 11-93 (TATLSKDPRR…MANITVKRPR (83 aa)). Residues 92–173 (PRRIHLPATK…SPGGGSEANG (82 aa)) form a disordered region. Serine 112 carries the phosphoserine modification. A compositionally biased stretch (basic and acidic residues) spans 117–131 (GPQRVEEVDQGRGYD). Phosphoserine is present on serine 136. Positions 147–163 (RRPRPGRRGRAGSHGRR) are enriched in basic residues. A phosphoserine mark is found at serine 164, serine 169, serine 203, and serine 319. A PDZ 2 domain is found at 195–272 (SVLVKRRDSE…KLSLLVLRDR (78 aa)). Positions 279–377 (IPPAVSDSDS…SSQSMEDRGY (99 aa)) are disordered. Threonine 325 is modified (phosphothreonine). Serine 327 is modified (phosphoserine). Residues 332–360 (PRLRRESSVDSRTISEPDEQRSELPRESS) are compositionally biased toward basic and acidic residues. Serine 371 is modified (phosphoserine). The PDZ 3 domain occupies 380-446 (DTRVVRFLKG…LTREEAVQFL (67 aa)). Positions 475–549 (GDSFYIRTHF…PNQSRAEQLA (75 aa)) constitute an SH3 domain. The Guanylate kinase-like domain occupies 580–761 (LRRGAKKTTQ…WYQELKAIIR (182 aa)). Serine 591 carries the phosphoserine modification. Residues 791 to 801 (ADSSADLSCDS) are compositionally biased toward low complexity. 2 disordered regions span residues 791–886 (ADSS…DSMR) and 899–919 (RVHD…ATDL). Over residues 812-828 (EGGAYTDGEGYTDGEGG) the composition is skewed to gly residues. Serine 856, serine 905, and serine 906 each carry phosphoserine.

This sequence belongs to the MAGUK family. As to quaternary structure, interacts with occludin OCLN, claudins and TPJ1. Interacts with PATJ. Interacts with UBN1. Interacts with FASLG. Interacts with CCND1. Phosphorylated.

It localises to the cell membrane. Its subcellular location is the cell junction. The protein resides in the tight junction. The protein localises to the nucleus. In terms of biological role, TJP1, TJP2, and TJP3 are closely related scaffolding proteins that link tight junction (TJ) transmembrane proteins such as claudins, junctional adhesion molecules, and occludin to the actin cytoskeleton. The tight junction acts to limit movement of substances through the paracellular space and as a boundary between the compositionally distinct apical and basolateral plasma membrane domains of epithelial and endothelial cells. Binds and recruits PATJ to tight junctions where it connects and stabilizes apical and lateral components of tight junctions. Promotes cell-cycle progression through the sequestration of cyclin D1 (CCND1) at tight junctions during mitosis which prevents CCND1 degradation during M-phase and enables S-phase transition. With TJP1 and TJP2, participates in the junctional retention and stability of the transcription factor DBPA, but is not involved in its shuttling to the nucleus. Contrary to TJP2, TJP3 is dispensable for individual viability, embryonic development, epithelial differentiation, and the establishment of TJs, at least in the laboratory environment. The polypeptide is Tight junction protein ZO-3 (TJP3) (Homo sapiens (Human)).